A 329-amino-acid polypeptide reads, in one-letter code: MARMYYEKDVDLEVLKNKKVAVLGYGSQGHAHAQNLRDNGVHVMIGLYDGSKSAQKAKEDGFEVKSVAEATKESDLTMMLMPDEKQKKVYEESVKDNLKEGQTLAFAHGFNIHYNQVQPPEFVDVVMVAPKGPGHLVRNVFTKGSGVPALFAVYQDHTKKATETVLAYAKGIGATRAGVLETTFKEETETDLFGEQSVLCGGISELIKLGYKTLVDAGYQKEVAYFECLHEMKLIVDLIYEGGFERMRYSISDTAEYGDYVSGKRVITDAAKQGMQNVLEDIQNGKFAKAWIKENEEGRENFLKTREEEYNTEIAEVGRNLRSMMSFLK.

A KARI N-terminal Rossmann domain is found at 2-182 (ARMYYEKDVD…GATRAGVLET (181 aa)). NADP(+) is bound by residues 25–28 (YGSQ), Ser51, Ser53, and 83–86 (DEKQ). Residue His108 is part of the active site. An NADP(+)-binding site is contributed by Gly134. One can recognise a KARI C-terminal knotted domain in the interval 183–328 (TFKEETETDL…RNLRSMMSFL (146 aa)). 4 residues coordinate Mg(2+): Asp191, Glu195, Glu227, and Glu231. Ser252 serves as a coordination point for substrate.

Belongs to the ketol-acid reductoisomerase family. It depends on Mg(2+) as a cofactor.

It catalyses the reaction (2R)-2,3-dihydroxy-3-methylbutanoate + NADP(+) = (2S)-2-acetolactate + NADPH + H(+). The catalysed reaction is (2R,3R)-2,3-dihydroxy-3-methylpentanoate + NADP(+) = (S)-2-ethyl-2-hydroxy-3-oxobutanoate + NADPH + H(+). The protein operates within amino-acid biosynthesis; L-isoleucine biosynthesis; L-isoleucine from 2-oxobutanoate: step 2/4. It functions in the pathway amino-acid biosynthesis; L-valine biosynthesis; L-valine from pyruvate: step 2/4. Functionally, involved in the biosynthesis of branched-chain amino acids (BCAA). Catalyzes an alkyl-migration followed by a ketol-acid reduction of (S)-2-acetolactate (S2AL) to yield (R)-2,3-dihydroxy-isovalerate. In the isomerase reaction, S2AL is rearranged via a Mg-dependent methyl migration to produce 3-hydroxy-3-methyl-2-ketobutyrate (HMKB). In the reductase reaction, this 2-ketoacid undergoes a metal-dependent reduction by NADPH to yield (R)-2,3-dihydroxy-isovalerate. The protein is Ketol-acid reductoisomerase (NADP(+)) of Clostridioides difficile (strain 630) (Peptoclostridium difficile).